The primary structure comprises 82 residues: uncharacterized protein (82 aa).

The next 2 helical transmembrane spans lie at 8–28 (LLSA…LPAP) and 50–70 (LYTV…YLVL).

The protein resides in the cell membrane. This is an uncharacterized protein from Klebsiella pneumoniae.